The primary structure comprises 151 residues: Large-conductance mechanosensitive channel (151 aa).

3 consecutive transmembrane segments (helical) span residues 14–34, 38–58, and 86–106; these read VVDM…VNTL, VLMP…LYLI, and GLFL…FLLV.

This sequence belongs to the MscL family. As to quaternary structure, homopentamer.

The protein resides in the cell inner membrane. In terms of biological role, channel that opens in response to stretch forces in the membrane lipid bilayer. May participate in the regulation of osmotic pressure changes within the cell. The protein is Large-conductance mechanosensitive channel of Pelodictyon phaeoclathratiforme (strain DSM 5477 / BU-1).